The sequence spans 506 residues: Maturase K (506 aa).

It belongs to the intron maturase 2 family. MatK subfamily.

The protein localises to the plastid. The protein resides in the chloroplast. Usually encoded in the trnK tRNA gene intron. Probably assists in splicing its own and other chloroplast group II introns. This is Maturase K from Crataegus monogyna (Hawthorn).